The primary structure comprises 65 residues: uncharacterized protein (65 aa).

This is an uncharacterized protein from Escherichia coli (Bacteriophage T4).